The sequence spans 111 residues: WAP four-disulfide core domain protein 12 (111 aa).

A signal peptide spans 1–23 (MGSSSFLVLMVSLALVTLVAAEG). The region spanning 27–74 (NIEKPGVCPADNIRCIKSDPPQCHTDQDCQGIRKCCYLHCGFKCVIPV) is the WAP domain. 4 cysteine pairs are disulfide-bonded: C34–C62, C41–C66, C49–C61, and C55–C70. The tract at residues 80–111 (GGNKDEDVSRPCPEPGWEAKPPGVFSTRCPQK) is disordered.

It localises to the secreted. In terms of biological role, antibacterial protein. Putative acid-stable proteinase inhibitor. The chain is WAP four-disulfide core domain protein 12 (WFDC12) from Callithrix jacchus (White-tufted-ear marmoset).